Here is a 138-residue protein sequence, read N- to C-terminus: Acidic phospholipase A2 5 (138 aa).

The signal sequence occupies residues 1 to 16; that stretch reads MRTLWIVAVWLIGVEG. 7 disulfide bridges follow: Cys-42-Cys-131, Cys-44-Cys-60, Cys-59-Cys-111, Cys-65-Cys-138, Cys-66-Cys-104, Cys-73-Cys-97, and Cys-91-Cys-102. Residues Tyr-43, Gly-45, and Gly-47 each coordinate Ca(2+). His-63 is an active-site residue. Asp-64 contributes to the Ca(2+) binding site. Residue Asp-105 is part of the active site.

This sequence belongs to the phospholipase A2 family. Group II subfamily. D49 sub-subfamily. It depends on Ca(2+) as a cofactor. In terms of tissue distribution, expressed by the venom gland.

Its subcellular location is the secreted. The catalysed reaction is a 1,2-diacyl-sn-glycero-3-phosphocholine + H2O = a 1-acyl-sn-glycero-3-phosphocholine + a fatty acid + H(+). PLA2 catalyzes the calcium-dependent hydrolysis of the 2-acyl groups in 3-sn-phosphoglycerides. The protein is Acidic phospholipase A2 5 of Echis ocellatus (Ocellated saw-scaled viper).